A 152-amino-acid chain; its full sequence is Large ribosomal subunit protein eL29 (152 aa).

Basic residues predominate over residues 1-26 (MAKSKNHTTHNQSRKWHRNGIKKPRS). The disordered stretch occupies residues 1-32 (MAKSKNHTTHNQSRKWHRNGIKKPRSQRYESL). Lys5 carries the post-translational modification N6-methyllysine. Position 31 is a phosphoserine (Ser31). The residue at position 33 (Lys33) is an N6-acetyllysine. Residues 119–152 (CRPKSQAKASTKAKPPAAAAPAAKGAQAPTKAPE) are disordered. The segment covering 121–152 (PKSQAKASTKAKPPAAAAPAAKGAQAPTKAPE) has biased composition (low complexity).

It belongs to the eukaryotic ribosomal protein eL29 family. As to quaternary structure, component of the large ribosomal subunit.

The protein resides in the cytoplasm. Component of the large ribosomal subunit. The ribosome is a large ribonucleoprotein complex responsible for the synthesis of proteins in the cell. The sequence is that of Large ribosomal subunit protein eL29 (RPL29) from Bos taurus (Bovine).